Reading from the N-terminus, the 1383-residue chain is DNA-directed RNA polymerase subunit beta'' (1383 aa).

Residues Cys-220, Cys-289, Cys-296, and Cys-299 each coordinate Zn(2+).

Belongs to the RNA polymerase beta' chain family. RpoC2 subfamily. In terms of assembly, in plastids the minimal PEP RNA polymerase catalytic core is composed of four subunits: alpha, beta, beta', and beta''. When a (nuclear-encoded) sigma factor is associated with the core the holoenzyme is formed, which can initiate transcription. Requires Zn(2+) as cofactor.

The protein resides in the plastid. It is found in the chloroplast. The enzyme catalyses RNA(n) + a ribonucleoside 5'-triphosphate = RNA(n+1) + diphosphate. DNA-dependent RNA polymerase catalyzes the transcription of DNA into RNA using the four ribonucleoside triphosphates as substrates. The sequence is that of DNA-directed RNA polymerase subunit beta'' from Oenothera argillicola (Appalachian evening primrose).